Reading from the N-terminus, the 382-residue chain is Anhydro-N-acetylmuramic acid kinase (382 aa).

Residue 22–29 (GTSMDGVD) coordinates ATP.

The protein belongs to the anhydro-N-acetylmuramic acid kinase family.

The catalysed reaction is 1,6-anhydro-N-acetyl-beta-muramate + ATP + H2O = N-acetyl-D-muramate 6-phosphate + ADP + H(+). It functions in the pathway amino-sugar metabolism; 1,6-anhydro-N-acetylmuramate degradation. It participates in cell wall biogenesis; peptidoglycan recycling. Its function is as follows. Catalyzes the specific phosphorylation of 1,6-anhydro-N-acetylmuramic acid (anhMurNAc) with the simultaneous cleavage of the 1,6-anhydro ring, generating MurNAc-6-P. Is required for the utilization of anhMurNAc either imported from the medium or derived from its own cell wall murein, and thus plays a role in cell wall recycling. The protein is Anhydro-N-acetylmuramic acid kinase of Burkholderia vietnamiensis (strain G4 / LMG 22486) (Burkholderia cepacia (strain R1808)).